Reading from the N-terminus, the 120-residue chain is NAD(P)H-quinone oxidoreductase subunit 3, chloroplastic (120 aa).

3 helical membrane-spanning segments follow: residues 9 to 29 (IFWA…FVSG), 64 to 84 (MFAL…PWAM), and 88 to 108 (VLGI…IVGL).

It belongs to the complex I subunit 3 family. As to quaternary structure, NDH is composed of at least 16 different subunits, 5 of which are encoded in the nucleus.

It is found in the plastid. The protein localises to the chloroplast thylakoid membrane. The enzyme catalyses a plastoquinone + NADH + (n+1) H(+)(in) = a plastoquinol + NAD(+) + n H(+)(out). It catalyses the reaction a plastoquinone + NADPH + (n+1) H(+)(in) = a plastoquinol + NADP(+) + n H(+)(out). Its function is as follows. NDH shuttles electrons from NAD(P)H:plastoquinone, via FMN and iron-sulfur (Fe-S) centers, to quinones in the photosynthetic chain and possibly in a chloroplast respiratory chain. The immediate electron acceptor for the enzyme in this species is believed to be plastoquinone. Couples the redox reaction to proton translocation, and thus conserves the redox energy in a proton gradient. This Daucus carota (Wild carrot) protein is NAD(P)H-quinone oxidoreductase subunit 3, chloroplastic.